Here is a 713-residue protein sequence, read N- to C-terminus: Polyribonucleotide nucleotidyltransferase (713 aa).

Positions 493 and 499 each coordinate Mg(2+). Residues 560–619 (PRMITIKINPEKIRDVIGKGGSVIRALTEETGTTIDISDDGVVTIASTNSEGMAEAKKRI) form the KH domain. The S1 motif domain maps to 629-697 (GHVYEGTVLK…EKGRVRLSAK (69 aa)).

This sequence belongs to the polyribonucleotide nucleotidyltransferase family. The cofactor is Mg(2+).

It is found in the cytoplasm. It catalyses the reaction RNA(n+1) + phosphate = RNA(n) + a ribonucleoside 5'-diphosphate. Functionally, involved in mRNA degradation. Catalyzes the phosphorolysis of single-stranded polyribonucleotides processively in the 3'- to 5'-direction. The polypeptide is Polyribonucleotide nucleotidyltransferase (Burkholderia pseudomallei (strain 1106a)).